The primary structure comprises 225 residues: Large ribosomal subunit protein uL1 (225 aa).

Belongs to the universal ribosomal protein uL1 family. Part of the 50S ribosomal subunit.

In terms of biological role, binds directly to 23S rRNA. Probably involved in E site tRNA release. Protein L1 is also a translational repressor protein, it controls the translation of its operon by binding to its mRNA. This Thermofilum pendens (strain DSM 2475 / Hrk 5) protein is Large ribosomal subunit protein uL1.